We begin with the raw amino-acid sequence, 343 residues long: Acetylglutamate kinase (343 aa).

Substrate contacts are provided by residues 98 to 99 (GG), arginine 120, and asparagine 219.

It belongs to the acetylglutamate kinase family. ArgB subfamily.

It localises to the cytoplasm. It catalyses the reaction N-acetyl-L-glutamate + ATP = N-acetyl-L-glutamyl 5-phosphate + ADP. It participates in amino-acid biosynthesis; L-arginine biosynthesis; N(2)-acetyl-L-ornithine from L-glutamate: step 2/4. Functionally, catalyzes the ATP-dependent phosphorylation of N-acetyl-L-glutamate. The sequence is that of Acetylglutamate kinase from Frankia alni (strain DSM 45986 / CECT 9034 / ACN14a).